The following is a 504-amino-acid chain: Maturase K (504 aa).

This sequence belongs to the intron maturase 2 family. MatK subfamily.

The protein localises to the plastid. It is found in the chloroplast. Its function is as follows. Usually encoded in the trnK tRNA gene intron. Probably assists in splicing its own and other chloroplast group II introns. The polypeptide is Maturase K (Carpinus betulus (European hornbeam)).